Reading from the N-terminus, the 445-residue chain is E3 ubiquitin-protein ligase pellino homolog 3 (445 aa).

A disordered region spans residues 1–24 (MVLEGNPDVGSPRTSDLQHPGSQG). Ser11 is modified (phosphoserine). Polar residues predominate over residues 12–24 (PRTSDLQHPGSQG).

Belongs to the pellino family. In terms of assembly, interacts with TRAF6, MAP3K14 and MAP3K7. Phosphorylated by IRAK1 enhancing its E3 ligase activity.

The catalysed reaction is S-ubiquitinyl-[E2 ubiquitin-conjugating enzyme]-L-cysteine + [acceptor protein]-L-lysine = [E2 ubiquitin-conjugating enzyme]-L-cysteine + N(6)-ubiquitinyl-[acceptor protein]-L-lysine.. It functions in the pathway protein modification; protein ubiquitination. Functionally, E3 ubiquitin ligase catalyzing the covalent attachment of ubiquitin moieties onto substrate proteins. Involved in the TLR and IL-1 signaling pathways via interaction with the complex containing IRAK kinases and TRAF6. Mediates 'Lys-63'-linked polyubiquitination of IRAK1. Can activate AP1/JUN and ELK1. Acts as a regulator of innate immunity by mediating 'Lys-63'-linked polyubiquitination of RIPK2 downstream of NOD1 and NOD2, thereby transforming RIPK2 into a scaffolding protein for downstream effectors, ultimately leading to activation of the NF-kappa-B and MAP kinases signaling. Catalyzes 'Lys-63'-linked polyubiquitination of RIPK2 in parallel of XIAP. This is E3 ubiquitin-protein ligase pellino homolog 3 from Mus musculus (Mouse).